The sequence spans 87 residues: Diazepam-binding inhibitor-like 5 (87 aa).

One can recognise an ACB domain in the interval 2–87 (SQVEFEMACA…VEELKKKEPC (86 aa)). An acyl-CoA contacts are provided by residues 29–33 (YSFYK), lysine 55, and tyrosine 74.

Belongs to the ACBP family. As to expression, exclusively expressed in late spermatids and spermatozoa. Not found in epididymis, spleen, bone marrow, skin, liver, brain, heart, kidney, muscle.

The protein resides in the cytoplasm. In terms of biological role, may be involved in the energy metabolism of the mature sperm. The chain is Diazepam-binding inhibitor-like 5 (Dbil5) from Mus musculus (Mouse).